Reading from the N-terminus, the 412-residue chain is Serine hydroxymethyltransferase (412 aa).

(6S)-5,6,7,8-tetrahydrofolate contacts are provided by residues Leu125 and 129–131 (GHL). Residue Lys234 is modified to N6-(pyridoxal phosphate)lysine. Glu250 serves as a coordination point for (6S)-5,6,7,8-tetrahydrofolate.

The protein belongs to the SHMT family. In terms of assembly, homodimer. The cofactor is pyridoxal 5'-phosphate.

The protein resides in the cytoplasm. The enzyme catalyses (6R)-5,10-methylene-5,6,7,8-tetrahydrofolate + glycine + H2O = (6S)-5,6,7,8-tetrahydrofolate + L-serine. It functions in the pathway one-carbon metabolism; tetrahydrofolate interconversion. It participates in amino-acid biosynthesis; glycine biosynthesis; glycine from L-serine: step 1/1. Functionally, catalyzes the reversible interconversion of serine and glycine with tetrahydrofolate (THF) serving as the one-carbon carrier. This reaction serves as the major source of one-carbon groups required for the biosynthesis of purines, thymidylate, methionine, and other important biomolecules. Also exhibits THF-independent aldolase activity toward beta-hydroxyamino acids, producing glycine and aldehydes, via a retro-aldol mechanism. In Deinococcus geothermalis (strain DSM 11300 / CIP 105573 / AG-3a), this protein is Serine hydroxymethyltransferase.